The chain runs to 338 residues: Phenylalanine--tRNA ligase alpha subunit (338 aa).

Residue E253 participates in Mg(2+) binding.

Belongs to the class-II aminoacyl-tRNA synthetase family. Phe-tRNA synthetase alpha subunit type 1 subfamily. Tetramer of two alpha and two beta subunits. Mg(2+) serves as cofactor.

Its subcellular location is the cytoplasm. It catalyses the reaction tRNA(Phe) + L-phenylalanine + ATP = L-phenylalanyl-tRNA(Phe) + AMP + diphosphate + H(+). The protein is Phenylalanine--tRNA ligase alpha subunit of Geobacter sp. (strain M21).